Reading from the N-terminus, the 243-residue chain is tRNA1(Val) (adenine(37)-N6)-methyltransferase (243 aa).

The protein belongs to the methyltransferase superfamily. tRNA (adenine-N(6)-)-methyltransferase family.

Its subcellular location is the cytoplasm. It carries out the reaction adenosine(37) in tRNA1(Val) + S-adenosyl-L-methionine = N(6)-methyladenosine(37) in tRNA1(Val) + S-adenosyl-L-homocysteine + H(+). Its function is as follows. Specifically methylates the adenine in position 37 of tRNA(1)(Val) (anticodon cmo5UAC). The polypeptide is tRNA1(Val) (adenine(37)-N6)-methyltransferase (Shewanella woodyi (strain ATCC 51908 / MS32)).